Here is a 75-residue protein sequence, read N- to C-terminus: Small ribosomal subunit protein bS18 (75 aa).

It belongs to the bacterial ribosomal protein bS18 family. In terms of assembly, part of the 30S ribosomal subunit. Forms a tight heterodimer with protein bS6.

Its function is as follows. Binds as a heterodimer with protein bS6 to the central domain of the 16S rRNA, where it helps stabilize the platform of the 30S subunit. The sequence is that of Small ribosomal subunit protein bS18 from Yersinia enterocolitica serotype O:8 / biotype 1B (strain NCTC 13174 / 8081).